A 728-amino-acid chain; its full sequence is Bacteriophytochrome (728 aa).

Position 12 (cysteine 12) interacts with a tetrapyrrole. A chromophore binding domain region spans residues isoleucine 17 to asparagine 495. A GAF domain is found at aspartate 139–valine 303. The Histidine kinase domain occupies valine 510 to glutamine 721. The residue at position 513 (histidine 513) is a Phosphohistidine; by autocatalysis.

It in the N-terminal section; belongs to the phytochrome family. Post-translationally, contains one covalently linked tetrapyrrole chromophore.

The catalysed reaction is ATP + protein L-histidine = ADP + protein N-phospho-L-histidine.. Functionally, photoreceptor which exists in two forms that are reversibly interconvertible by light: the R form that absorbs maximally in the red region of the spectrum and the FR form that absorbs maximally in the far-red region. This chain is Bacteriophytochrome (bphP), found in Pseudomonas aeruginosa (strain ATCC 15692 / DSM 22644 / CIP 104116 / JCM 14847 / LMG 12228 / 1C / PRS 101 / PAO1).